Reading from the N-terminus, the 487-residue chain is Malonate-semialdehyde dehydrogenase (487 aa).

NAD(+) is bound by residues Ala-150, Phe-152, Lys-176, Glu-179, Arg-180, Ser-229, and Thr-251. Cys-284 (nucleophile) is an active-site residue. Glu-382 is a binding site for NAD(+).

This sequence belongs to the aldehyde dehydrogenase family. IolA subfamily. In terms of assembly, homotetramer.

It carries out the reaction 3-oxopropanoate + NAD(+) + CoA + H2O = hydrogencarbonate + acetyl-CoA + NADH + H(+). The catalysed reaction is 2-methyl-3-oxopropanoate + NAD(+) + CoA + H2O = propanoyl-CoA + hydrogencarbonate + NADH + H(+). It functions in the pathway polyol metabolism; myo-inositol degradation into acetyl-CoA; acetyl-CoA from myo-inositol: step 7/7. Catalyzes the oxidation of malonate semialdehyde (MSA) and methylmalonate semialdehyde (MMSA) into acetyl-CoA and propanoyl-CoA, respectively. Is involved in a myo-inositol catabolic pathway. Bicarbonate, and not CO2, is the end-product of the enzymatic reaction. The polypeptide is Malonate-semialdehyde dehydrogenase (Bacillus subtilis subsp. natto).